A 622-amino-acid chain; its full sequence is Basal cell adhesion molecule (622 aa).

Positions 1-25 (MEPPDARAGLLWLTFLLSGYSGAQA) are cleaved as a signal peptide. Ig-like V-type domains are found at residues 26–135 (ELHV…SSVR) and 140–250 (PEDT…HTFR). The Extracellular portion of the chain corresponds to 26–541 (ELHVSVPPRV…GSVAPQTAQA (516 aa)). Cystine bridges form between Cys47-Cys118, Cys165-Cys230, and Cys284-Cys330. Ig-like C2-type domains lie at 267–342 (PSTT…EEVQ), 356–435 (PLEL…QSFQ), and 442–532 (PELK…FHFG). N-linked (GlcNAc...) asparagine glycans are attached at residues Asn314, Asn323, Asn370, and Asn377. Intrachain disulfides connect Cys378-Cys418 and Cys467-Cys516. A helical transmembrane segment spans residues 542–562 (GVAVMAVAVSVGLLLLVVAAF). The Cytoplasmic portion of the chain corresponds to 563–622 (YCMRRKGRPGCCRRAEKGAPPAREPELSHSGSERPEHTGLLMGGPSGGGRGGSGGFGDEC). Positions 574-622 (CRRAEKGAPPAREPELSHSGSERPEHTGLLMGGPSGGGRGGSGGFGDEC) are disordered. Basic and acidic residues predominate over residues 575–599 (RRAEKGAPPAREPELSHSGSERPEH). Phosphoserine is present on residues Ser590, Ser592, Ser594, and Ser615. Residues 603 to 622 (LMGGPSGGGRGGSGGFGDEC) are compositionally biased toward gly residues.

Homodimer. Interacts with ITGA4:ITGB1. Interacts with spectrins SPTA1 and SPTB1. In terms of processing, epinephrine-stimulated phosphorylation of Ser-615 by PKA enhances adhesion to laminin. Ser-615 can also be phosphorylated by AKT1.

The protein localises to the cell membrane. Functionally, transmembrane glycoprotein that functions as both a receptor and an adhesion molecule playing a crucial role in cell adhesion, motility, migration and invasion. Extracellular domain enables binding to extracellular matrix proteins, such as laminin, integrin and other ligands while its intracellular domain interacts with cytoskeletal proteins like hemoglobin, facilitating cell signal transduction. Serves as a receptor for laminin alpha-5/LAMA5 to promote cell adhesion. Mechanistically, JAK2 induces BCAM phosphorylation and activates its adhesion to laminin by stimulating a Rap1/AKT signaling pathway in the absence of EPOR. The protein is Basal cell adhesion molecule (Bcam) of Mus musculus (Mouse).